The chain runs to 470 residues: MSKLVISTSIFQSQVADLLPCNNHQKSQLTYSLINAYDLLQHFDEVLTFPYARKDDLLEFHSKSYIDYLINGRFNKMMAQDVNNPMVESKWSELSELADNWNEKIDYNPSQDLQRFTTRENLYNYYLNHSQALENNMDCINNSEVPTNDKPTDTYILNSETKQYNLEGDCPIFSYLPMYCQVITGATLNLLDHLSPTERLIGINWDGGRHHAFKQRASGFCYINDVVLLIQRLRKAKLNKITYVDFDLHHGDGVEKAFQYSKQIQTISVHLYEPGFFPGTGSLSDSRKDKNVVNIPLKHGCDDNYLELIASKIVNPLIERHEPEALIIECGGDGLLGDRFNEWQLTIRGLSRIIINIMKSYPRAHIFLLGGGGYNDLLMSRFYTYLTWCVTKQFSNLRCGDNNSFQIDPFDVCDGDDSEQFIREHDLVEMYNEENYQYWIYEMEGSSRMKMLRNDNKDRDMVELMKFYEL.

Residues 47 to 392 form a histone deacetylase region; the sequence is LTFPYARKDD…YTYLTWCVTK (346 aa). At serine 110 the chain carries Phosphoserine. Residue histidine 211 is part of the active site.

It belongs to the histone deacetylase family. HD type 1 subfamily.

Its subcellular location is the nucleus. It catalyses the reaction N(6)-acetyl-L-lysyl-[histone] + H2O = L-lysyl-[histone] + acetate. Its function is as follows. Responsible for the deacetylation of lysine residues on the N-terminal part of the core histones (H2A, H2B, H3 and H4). Histone deacetylation plays an important role in transcriptional regulation, cell cycle progression and developmental events. Histone deacetylases act via the formation of large multiprotein complexes. The chain is Histone deacetylase HOS1 (HOS1) from Saccharomyces cerevisiae (strain ATCC 204508 / S288c) (Baker's yeast).